Reading from the N-terminus, the 24-residue chain is 60 kDa chaperonin, mitochondrial (24 aa).

It belongs to the chaperonin (HSP60) family. In terms of assembly, forms a single seven-member ring complex, in tight association with the p63 protein. In terms of tissue distribution, testis.

The protein resides in the mitochondrion. Implicated in mitochondrial protein import and macromolecular assembly. May facilitate the correct folding of imported proteins. May also prevent misfolding and promote the refolding and proper assembly of unfolded polypeptides generated under stress conditions in the mitochondrial matrix. This chain is 60 kDa chaperonin, mitochondrial, found in Heliothis virescens (Tobacco budworm moth).